The chain runs to 285 residues: sn-2 palmitoyl-lipid 9-desaturase (285 aa).

Helical transmembrane passes span 20–40 and 44–64; these read WINVVFFGVFHALALLSPWFF and ALGLLVFLHWLFGSIGICLGY. Residues 65–70 carry the Histidine box-1 motif; it reads HRLLSH. Residues 81 to 101 form a helical membrane-spanning segment; that stretch reads YAIALIGALALQGGPIFWVGG. Residues 102–106 carry the Histidine box-2 motif; that stretch reads HRQHH. The chain crosses the membrane as a helical span at residues 169-189; sequence IPFALLLYVLGGWPFVFYGVF. Positions 239 to 243 match the Histidine box-3 motif; that stretch reads HHTYP.

This sequence belongs to the fatty acid desaturase type 2 family. Fe(2+) is required as a cofactor.

The protein localises to the membrane. It catalyses the reaction a 1-acyl-2-hexadecanoyl-glycerolipid + 2 reduced [2Fe-2S]-[ferredoxin] + O2 + 2 H(+) = a 1-acyl-2-[(9Z)-hexadecenoyl]-glycerolipid + 2 oxidized [2Fe-2S]-[ferredoxin] + 2 H2O. It functions in the pathway lipid metabolism; fatty acid biosynthesis. In terms of biological role, desaturase involved in fatty acid biosynthesis. Introduces a double bond at carbon 9 of palmitoyl groups (16:0) attached to the sn-2 position of the glycerol moiety of membrane glycerolipids. This chain is sn-2 palmitoyl-lipid 9-desaturase, found in Nostoc sp. (strain 36).